The primary structure comprises 174 residues: ATP-dependent protease subunit HslV (174 aa).

Residue T2 is part of the active site. 3 residues coordinate Na(+): A157, C160, and T163.

Belongs to the peptidase T1B family. HslV subfamily. As to quaternary structure, a double ring-shaped homohexamer of HslV is capped on each side by a ring-shaped HslU homohexamer. The assembly of the HslU/HslV complex is dependent on binding of ATP.

The protein localises to the cytoplasm. It carries out the reaction ATP-dependent cleavage of peptide bonds with broad specificity.. Its activity is regulated as follows. Allosterically activated by HslU binding. Protease subunit of a proteasome-like degradation complex believed to be a general protein degrading machinery. In Shewanella baltica (strain OS195), this protein is ATP-dependent protease subunit HslV.